The primary structure comprises 1019 residues: TOG array regulator of axonemal microtubules protein 2 (1019 aa).

4 disordered regions span residues 28–54, 131–158, 249–311, and 991–1019; these read AGPRVLPPGSINSSLPHGEGSLQPEPR, RRLSEGLAASSRASLDPGGGPQGVPLHS, TPSR…AKKP, and SLGGSRKATDRGVAPDSKTTGSSYPFQLD. Over residues 1007-1019 the composition is skewed to polar residues; the sequence is SKTTGSSYPFQLD.

This sequence belongs to the Crescerin family.

This chain is TOG array regulator of axonemal microtubules protein 2, found in Homo sapiens (Human).